The following is a 464-amino-acid chain: MVRVRFAPSPTGHLHVGGARTALFNWMFARKEGGKFILRIEDTDTERSSREYEQQILESLRWCGLDWDEGPDIGGDFGPYRQSERLEIYREYAEKLVEDKRAYYVVYDKEDPSKELFTTYEYPHEYKEKGHPVTIKFKVLPGKTSFEDLLKGYMEFDNSTLEDFIIMKSNGFPTYNFAVVVDDHLMRISHVFRGEDHLSNTPKQLMIYEAFGWEAPVFMHIPLILGSDRTPLSKRHGATSVEHFRREGILSRALMNYLALLGWRVEGDEIFTIEEKLQSFDPKDISNKGVIFDYQKLEWVNGKHMRRIDLEDLKREFIEWAKYAGKEIPSVDERYFSETLRICREKVNTLSQLYDIMYPFMNDDYEYEKDYVEKFLKREEAERVLEEAKKAFKDLNSWNMEEIEKTLRDLSEKGLASKKVVFQLIRGAVTGKLVTPGLFETIEVLGKERTLKRLERTLQFLKKT.

Residues 8–18 (PSPTGHLHVGG) carry the 'HIGH' region motif. The 'KMSKS' region signature appears at 231–235 (PLSKR). Position 234 (lysine 234) interacts with ATP.

The protein belongs to the class-I aminoacyl-tRNA synthetase family. Glutamate--tRNA ligase type 1 subfamily. Monomer.

It is found in the cytoplasm. The catalysed reaction is tRNA(Glu) + L-glutamate + ATP = L-glutamyl-tRNA(Glu) + AMP + diphosphate. Its function is as follows. Catalyzes the attachment of glutamate to tRNA(Glu) in a two-step reaction: glutamate is first activated by ATP to form Glu-AMP and then transferred to the acceptor end of tRNA(Glu). This is Glutamate--tRNA ligase 1 from Thermotoga petrophila (strain ATCC BAA-488 / DSM 13995 / JCM 10881 / RKU-1).